Reading from the N-terminus, the 547-residue chain is Inositol 1,4,5-trisphosphate receptor-interacting protein-like 1 (547 aa).

Positions 1 to 22 (MAVISLMFLAVMYVVHHPLMVS) are cleaved as a signal peptide. The Extracellular portion of the chain corresponds to 23 to 96 (DRMDLDTLAR…PFQAGGQDGG (74 aa)). A coiled-coil region spans residues 28 to 66 (DTLARSRQLEKRMSEEMRQLEMEFEERSRAAEQKQKVEN). A helical membrane pass occupies residues 97-117 (PLGWILGNLWNAGLFCLFLIF). The Cytoplasmic portion of the chain corresponds to 118 to 547 (ELLRQSMQHE…LPCSPVAGGL (430 aa)).

The protein belongs to the ITPRIP family.

Its subcellular location is the cell membrane. In terms of biological role, functions as a ligand of CD3E, inhibiting TCR-CD3 complex signaling to regulate T cell activation. Induces stable CD3E-NCK1 binding, thereby preventing the CD3E-ZAP70 interaction and subsequently inhibiting the activation of the downstream ERK-NFkB signaling cascade and calcium influx. This is Inositol 1,4,5-trisphosphate receptor-interacting protein-like 1 (Itpripl1) from Mus musculus (Mouse).